A 226-amino-acid polypeptide reads, in one-letter code: 2-C-methyl-D-erythritol 4-phosphate cytidylyltransferase (226 aa).

This sequence belongs to the IspD/TarI cytidylyltransferase family. IspD subfamily.

It carries out the reaction 2-C-methyl-D-erythritol 4-phosphate + CTP + H(+) = 4-CDP-2-C-methyl-D-erythritol + diphosphate. The protein operates within isoprenoid biosynthesis; isopentenyl diphosphate biosynthesis via DXP pathway; isopentenyl diphosphate from 1-deoxy-D-xylulose 5-phosphate: step 2/6. In terms of biological role, catalyzes the formation of 4-diphosphocytidyl-2-C-methyl-D-erythritol from CTP and 2-C-methyl-D-erythritol 4-phosphate (MEP). The sequence is that of 2-C-methyl-D-erythritol 4-phosphate cytidylyltransferase from Actinobacillus pleuropneumoniae serotype 7 (strain AP76).